The chain runs to 179 residues: Natural killer cells antigen CD94 (179 aa).

The Cytoplasmic portion of the chain corresponds to 1–10 (MAVSRITRWR). Residues 11–31 (LMSMFFGIKCLFLIVALGVLV) traverse the membrane as a helical; Signal-anchor for type II membrane protein segment. Residues 32–179 (KNSFTIQNIQ…NRFICKQLPT (148 aa)) lie on the Extracellular side of the membrane. 4 disulfides stabilise this stretch: Cys58-Cys70, Cys61-Cys72, Cys89-Cys174, and Cys152-Cys166. In terms of domain architecture, C-type lectin spans 68–175 (HQCSCYFISK…CENKNRFICK (108 aa)). Asn93 is a glycosylation site (N-linked (GlcNAc...) asparagine).

Can form disulfide-bonded heterodimer with NKG2 family members KLRC1 and KLRC2. KLRD1-KLRC1 heterodimer interacts with peptide-bound MHC-E-B2M heterotrimeric complex. KLRD1 plays a prominent role in directly interacting with MHC-E. KLRD1-KLRC1 interacts with much higher affinity with peptide-bound MHC-E-B2M than KLRD1-KLRC2. Interacts with the adapter protein TYROBP/DAP12; this interaction is required for cell surface expression and cell activation.

It localises to the cell membrane. In terms of biological role, immune receptor involved in self-nonself discrimination. In complex with KLRC1 or KLRC2 on cytotoxic and regulatory lymphocyte subsets, recognizes non-classical major histocompatibility (MHC) class Ib molecule MHC-E loaded with self-peptides derived from the signal sequence of classical MHC class Ia and non-classical MHC class Ib molecules. Enables cytotoxic cells to monitor the expression of MHC class I molecules in healthy cells and to tolerate self. Primarily functions as a ligand binding subunit as it lacks the capacity to signal. Its function is as follows. KLRD1-KLRC1 acts as an immune inhibitory receptor. Key inhibitory receptor on natural killer (NK) cells that regulates their activation and effector functions. Dominantly counteracts T cell receptor signaling on a subset of memory/effector CD8-positive T cells as part of an antigen-driven response to avoid autoimmunity. On intraepithelial CD8-positive gamma-delta regulatory T cells triggers TGFB1 secretion, which in turn limits the cytotoxic programming of intraepithelial CD8-positive alpha-beta T cells, distinguishing harmless from pathogenic antigens. In MHC-E-rich tumor microenvironment, acts as an immune inhibitory checkpoint and may contribute to progressive loss of effector functions of NK cells and tumor-specific T cells, a state known as cell exhaustion. Upon MHC-E-peptide binding, transmits intracellular signals through KLRC1 immunoreceptor tyrosine-based inhibition motifs (ITIMs) by recruiting INPP5D/SHIP-1 and INPPL1/SHIP-2 tyrosine phosphatases to ITIMs, and ultimately opposing signals transmitted by activating receptors through dephosphorylation of proximal signaling molecules. Functionally, KLRD1-KLRC2 acts as an immune activating receptor. On cytotoxic lymphocyte subsets recognizes MHC-E loaded with signal sequence-derived peptides from non-classical MHC class Ib MHC-G molecules, likely playing a role in the generation and effector functions of adaptive NK cells and in maternal-fetal tolerance during pregnancy. Regulates the effector functions of terminally differentiated cytotoxic lymphocyte subsets, and in particular may play a role in adaptive NK cell response to viral infection. Upon MHC-E-peptide binding, transmits intracellular signals via the adapter protein TYROBP/DAP12, triggering the phosphorylation of proximal signaling molecules and cell activation. The sequence is that of Natural killer cells antigen CD94 (Klrd1) from Rattus norvegicus (Rat).